Consider the following 38-residue polypeptide: Potassium channel toxin alpha-KTx 2.10 (38 aa).

Intrachain disulfides connect Cys7/Cys29, Cys13/Cys34, and Cys17/Cys36.

Expressed by the venom gland.

It is found in the secreted. Its function is as follows. Blocks human voltage-gated potassium (Kv) channel Kv1.2/KCNA2. Does not inhibit human Kv1.1/KCNA1 at 100nM concentration. The polypeptide is Potassium channel toxin alpha-KTx 2.10 (Centruroides bonito (Scorpion)).